The primary structure comprises 1920 residues: rRNA biogenesis protein RRP5 (1920 aa).

Residues 1–65 (MVVPQKKFAN…GTSLSKKERE (65 aa)) are disordered. S1 motif domains are found at residues 128 to 210 (GMKL…LSLR), 226 to 291 (GMVF…LSSD), 314 to 384 (GMMV…LTLS), 400 to 473 (GDIF…GTLK), 490 to 557 (GMVT…VTYK), 577 to 646 (GLVT…LSFM), 661 to 733 (GSIV…LSSK), 753 to 822 (NSVV…LSLK), 866 to 930 (GSLI…LSLR), 958 to 1031 (EVHQ…LLLD), 1054 to 1129 (GSVV…LSVK), 1153 to 1224 (GQCV…LVQR), 1260 to 1334 (GDIL…LSLR), 1369 to 1438 (DMGV…VTLK), and 1459 to 1529 (GDMI…LGMK). 2 disordered regions span residues 1535-1555 (NGDD…ECDP) and 1605-1652 (TDFD…LEHH). Residues 1620-1652 (NKDEKSKRREKQKDKEEREKKIQAAEGRLLEHH) are compositionally biased toward basic and acidic residues. HAT repeat units follow at residues 1651 to 1683 (HHAP…FMLS), 1685 to 1722 (ADIE…LENE), 1726 to 1758 (PPEE…YERT), 1759 to 1791 (EQYK…SSLK), 1828 to 1860 (GVAD…QEIR), and 1862 to 1897 (GEDD…YEKS).

Highly expressed in flowers and at lower levels in roots, leaves, stems and siliques.

Its subcellular location is the nucleus. It localises to the nucleolus. Functionally, involved in the biogenesis of ribosomal RNA (rRNA). Required for the formation of 5.8S rRNA. Required for normal development of female gametophytes. This Arabidopsis thaliana (Mouse-ear cress) protein is rRNA biogenesis protein RRP5.